A 224-amino-acid chain; its full sequence is Uracil-DNA glycosylase 2 (224 aa).

The Proton acceptor role is filled by Asp64.

Belongs to the uracil-DNA glycosylase (UDG) superfamily. UNG family.

It is found in the cytoplasm. It carries out the reaction Hydrolyzes single-stranded DNA or mismatched double-stranded DNA and polynucleotides, releasing free uracil.. Excises uracil residues from the DNA which can arise as a result of misincorporation of dUMP residues by DNA polymerase or due to deamination of cytosine. In Listeria monocytogenes serotype 4b (strain F2365), this protein is Uracil-DNA glycosylase 2.